We begin with the raw amino-acid sequence, 236 residues long: Class B acid phosphatase (236 aa).

The first 22 residues, Met-1–Ala-22, serve as a signal peptide directing secretion. Residue Asp-70 is the Nucleophile of the active site. 2 residues coordinate Mg(2+): Asp-70 and Asp-72. Residue Asp-72 is the Proton donor of the active site. Residues Thr-138–Gly-139 and Lys-176 each bind substrate. Position 191 (Asp-191) interacts with Mg(2+).

It belongs to the class B bacterial acid phosphatase family. In terms of assembly, homotetramer. Requires Mg(2+) as cofactor.

The protein localises to the periplasm. It catalyses the reaction a phosphate monoester + H2O = an alcohol + phosphate. Its function is as follows. Dephosphorylates several organic phosphate monoesters. Also has a phosphotransferase activity catalyzing the transfer of low-energy phosphate groups from organic phosphate monoesters to free hydroxyl groups of various organic compounds. This Marinomonas sp. (strain MWYL1) protein is Class B acid phosphatase.